The following is a 225-amino-acid chain: Probable septum site-determining protein MinC (225 aa).

This sequence belongs to the MinC family. As to quaternary structure, interacts with MinD and FtsZ.

Cell division inhibitor that blocks the formation of polar Z ring septums. Rapidly oscillates between the poles of the cell to destabilize FtsZ filaments that have formed before they mature into polar Z rings. Prevents FtsZ polymerization. This Listeria monocytogenes serotype 4b (strain CLIP80459) protein is Probable septum site-determining protein MinC.